We begin with the raw amino-acid sequence, 66 residues long: Large ribosomal subunit protein bL35 (66 aa).

This sequence belongs to the bacterial ribosomal protein bL35 family.

The protein is Large ribosomal subunit protein bL35 of Methylobacterium nodulans (strain LMG 21967 / CNCM I-2342 / ORS 2060).